We begin with the raw amino-acid sequence, 150 residues long: Large ribosomal subunit protein bL9 (150 aa).

Belongs to the bacterial ribosomal protein bL9 family.

Its function is as follows. Binds to the 23S rRNA. The polypeptide is Large ribosomal subunit protein bL9 (Pseudoalteromonas atlantica (strain T6c / ATCC BAA-1087)).